A 480-amino-acid chain; its full sequence is Aspartyl/glutamyl-tRNA(Asn/Gln) amidotransferase subunit B (480 aa).

Belongs to the GatB/GatE family. GatB subfamily. As to quaternary structure, heterotrimer of A, B and C subunits.

It carries out the reaction L-glutamyl-tRNA(Gln) + L-glutamine + ATP + H2O = L-glutaminyl-tRNA(Gln) + L-glutamate + ADP + phosphate + H(+). It catalyses the reaction L-aspartyl-tRNA(Asn) + L-glutamine + ATP + H2O = L-asparaginyl-tRNA(Asn) + L-glutamate + ADP + phosphate + 2 H(+). Allows the formation of correctly charged Asn-tRNA(Asn) or Gln-tRNA(Gln) through the transamidation of misacylated Asp-tRNA(Asn) or Glu-tRNA(Gln) in organisms which lack either or both of asparaginyl-tRNA or glutaminyl-tRNA synthetases. The reaction takes place in the presence of glutamine and ATP through an activated phospho-Asp-tRNA(Asn) or phospho-Glu-tRNA(Gln). The polypeptide is Aspartyl/glutamyl-tRNA(Asn/Gln) amidotransferase subunit B (Streptococcus pneumoniae serotype 4 (strain ATCC BAA-334 / TIGR4)).